Consider the following 420-residue polypeptide: MYRVWNFITGYSLLLIGGAIIALIWANIDINSYHHFTEVVIWADAPIGHLHDDGHGHVVRDLTLHYLVNDLLMALFFAIAAKEVWEAVILKNGSLRGKKAATPLVATLGGMVGPISIYLGIAYFLGSTTFDAVANGWAIPTATDIAFSYLVGRLVFGAGHPAVRFLLLLAIADDAAGLLILAIFYPSGELAPAWLLLSFGAALGVYVLANWLPRRLDRGDQLRRRSSWMRQKLSFWPYALAGCASWYGFMQSGLHPALGLLPIVLTIPHADRAFGIFSAAEVHLHDLLNTMEHALKYPVEIILGLFGLMNAGVAFSAMGEATWLVLAGLLIGKPVGIFLFGWLAAKPLGLGLPQGMRMIDLVVIGCVAAIGFTVSLFVASVAFEPGPVQDAAKMGALFSFGAAAVSIIVGKLTQVQKQEI.

The next 11 helical transmembrane spans lie at Val-4–Ile-24, Asp-70–Leu-90, Leu-104–Phe-124, Ala-132–Gly-152, Phe-165–Tyr-185, Pro-192–Leu-212, Leu-233–Met-250, Val-299–Gly-319, Trp-323–Leu-343, Leu-361–Val-381, and Gly-395–Val-415.

Belongs to the NhaA Na(+)/H(+) (TC 2.A.33) antiporter family.

It localises to the cell inner membrane. The enzyme catalyses Na(+)(in) + 2 H(+)(out) = Na(+)(out) + 2 H(+)(in). Its function is as follows. Na(+)/H(+) antiporter that extrudes sodium in exchange for external protons. This is Na(+)/H(+) antiporter NhaA from Jannaschia sp. (strain CCS1).